The primary structure comprises 140 residues: Granulocyte-macrophage colony-stimulating factor (140 aa).

A signal peptide spans methionine 1–cysteine 17. A glycan (O-linked (GalNAc...) serine) is linked at serine 24. A glycan (O-linked (GalNAc...) threonine) is linked at threonine 27. N-linked (GlcNAc...) asparagine glycans are attached at residues asparagine 45, asparagine 55, and asparagine 87. 2 disulfides stabilise this stretch: cysteine 72-cysteine 114 and cysteine 106-cysteine 139.

Belongs to the GM-CSF family. As to quaternary structure, monomer. The signaling GM-CSF receptor complex is a dodecamer of two head-to-head hexamers of two alpha, two beta, and two ligand subunits.

The protein localises to the secreted. Cytokine that stimulates the growth and differentiation of hematopoietic precursor cells from various lineages, including granulocytes, macrophages, eosinophils and erythrocytes. This Cavia porcellus (Guinea pig) protein is Granulocyte-macrophage colony-stimulating factor (CSF2).